The chain runs to 204 residues: MRAHVAQHVSGELGAVGLQVEADQLVGEVQGVHGQQRAPRDAPVALAQRHRQQLQLELLELLGGQVLQRIQDGVARAPHGSRIPGRCRRSPRCSRRPGGSRLRGGTWTPRLPPTLVSRLPAPVRCPPAKGASLLHPWSPPTQASGLGPQAVGGRQDRALQLACEVGPGRGPQRGSWVAPACLWACTSGYRPETWAGSHWVYWST.

The tract at residues alanine 77–leucine 111 is disordered. Basic residues predominate over residues glycine 85 to arginine 95. Positions arginine 96–glycine 105 are enriched in low complexity.

This is an uncharacterized protein from Homo sapiens (Human).